The primary structure comprises 299 residues: Bifunctional protein FolD 1 (299 aa).

Residues 168 to 170, Ser193, and Ile234 contribute to the NADP(+) site; that span reads GRS.

Belongs to the tetrahydrofolate dehydrogenase/cyclohydrolase family. Homodimer.

The catalysed reaction is (6R)-5,10-methylene-5,6,7,8-tetrahydrofolate + NADP(+) = (6R)-5,10-methenyltetrahydrofolate + NADPH. It carries out the reaction (6R)-5,10-methenyltetrahydrofolate + H2O = (6R)-10-formyltetrahydrofolate + H(+). The protein operates within one-carbon metabolism; tetrahydrofolate interconversion. Functionally, catalyzes the oxidation of 5,10-methylenetetrahydrofolate to 5,10-methenyltetrahydrofolate and then the hydrolysis of 5,10-methenyltetrahydrofolate to 10-formyltetrahydrofolate. The polypeptide is Bifunctional protein FolD 1 (Rhizobium etli (strain ATCC 51251 / DSM 11541 / JCM 21823 / NBRC 15573 / CFN 42)).